Here is a 342-residue protein sequence, read N- to C-terminus: Probable long-chain-alcohol O-fatty-acyltransferase 3 (342 aa).

The next 8 membrane-spanning stretches (helical) occupy residues Ile-9–Ile-29, Leu-36–Val-56, Phe-58–Ser-78, Ile-115–Glu-135, Ile-153–Gly-173, Met-227–Phe-247, Thr-255–Val-275, and Val-297–Ile-317.

Belongs to the wax synthase family.

It is found in the membrane. It carries out the reaction a long chain fatty alcohol + a fatty acyl-CoA = a wax ester + CoA. Catalyzes the final step in the synthesis of long-chain linear esters (waxes). The chain is Probable long-chain-alcohol O-fatty-acyltransferase 3 (AT3) from Arabidopsis thaliana (Mouse-ear cress).